The primary structure comprises 517 residues: MRTMAWVLARINKLQIHRTNIFWQQRFSYLLLIQDDIYAIACNRFSKKSGLKKIDNSNLNNRFSFITKRRLISEIRQQNQYFFLETSERMRKKRFRQGNQSFCYCINYYFRSIREIVILVLQIVLSVQLQPLLREFNECNSSQSIHSIFPFMEDHFSHRHCLADIKIPYSVHPEILIRFFRRRIQDAPFPHSLRLIVHEYKNIIVLDESIPLEIKKLSTLLWNYYIHEFESTLVSLWKKTWCFVTLYHKALLDRTQSIQKIEHIKEQSHVTKSSWIIILSGSIVPCTKKDSLYYVRYGSNFIVAVGGTKFLIHKWKYYFIIFWQYYFHSWFRPYRICIRKSSKDCLPFLGYILGFRPRIIVVQARVINDLLITSFIMKELCVIIPVFRLIQLLTKEKFCNTSGRPISKSAWTTFQDDDILNQFNHIWKNLFYYYSGCLNRSDLYQIQYILRFSCAKTLACKHKSTIRVVWKKYGSRLFPRSSFYKKQELILSNVHFHKRRFWYLDLIQMYFIADLLR.

It belongs to the intron maturase 2 family. MatK subfamily.

The protein resides in the plastid. Its subcellular location is the chloroplast. Its function is as follows. Usually encoded in the trnK tRNA gene intron. Probably assists in splicing its own and other chloroplast group II introns. The sequence is that of Maturase K from Palhinhaea cernua (Nodding clubmoss).